We begin with the raw amino-acid sequence, 517 residues long: MTKNIHDQRILILDFGSQYTQLVARRVREIGVYCELWSWDVEEADIREFNPDGIILSGGPESVTEDNSPRAPQYVFDSGVPVLGVCYGMQTMAEQLGGKVSTSDEREFGYAAVKVSGESAIFKDLEATQDVWMSHGDKVVEIPAGFTKVGETDTCPYAAMANEEKKYYGVQFHPEVTHTKNGLQMLENFVLGVCGCERLWTSESIIEDAVARIKEQVGDDEVILGLSGGVDSSVVAMLVHRAIGDKLTCVFVDNGLLRLNEGQQVMDMFGDKFGLNIIKVDAEERFLKALEGKSDPEEKRKTIGHVFVDVFDEESKKLKNAKWLAQGTIYPDVIESAASKTGKAHVIKSHHNVGGLPDDMEMGLVEPLRELFKDEVRKIGLELGLPYEMLYRHPFPGPGLGVRVLGEIKKEYCDLLRRADAIFIEELHAADLYNKVSQAFTVFLPVRSVGVMGDGRKYDWVVSLRAVETIDFMTAHWAHLPYDFLGKVSNRIINEVNGISRVVYDISGKPPATIEWE.

The Glutamine amidotransferase type-1 domain occupies 9 to 199 (RILILDFGSQ…VLGVCGCERL (191 aa)). Cys-86 acts as the Nucleophile in catalysis. Residues His-173 and Glu-175 contribute to the active site. Residues 200–392 (WTSESIIEDA…LGLPYEMLYR (193 aa)) form the GMPS ATP-PPase domain. An ATP-binding site is contributed by 227–233 (SGGVDSS).

In terms of assembly, homodimer.

It carries out the reaction XMP + L-glutamine + ATP + H2O = GMP + L-glutamate + AMP + diphosphate + 2 H(+). Its pathway is purine metabolism; GMP biosynthesis; GMP from XMP (L-Gln route): step 1/1. Functionally, catalyzes the synthesis of GMP from XMP. This Vibrio vulnificus (strain YJ016) protein is GMP synthase [glutamine-hydrolyzing].